Here is a 356-residue protein sequence, read N- to C-terminus: Histidinol-phosphate aminotransferase (356 aa).

K214 is modified (N6-(pyridoxal phosphate)lysine).

The protein belongs to the class-II pyridoxal-phosphate-dependent aminotransferase family. Histidinol-phosphate aminotransferase subfamily. Homodimer. Requires pyridoxal 5'-phosphate as cofactor.

It carries out the reaction L-histidinol phosphate + 2-oxoglutarate = 3-(imidazol-4-yl)-2-oxopropyl phosphate + L-glutamate. Its pathway is amino-acid biosynthesis; L-histidine biosynthesis; L-histidine from 5-phospho-alpha-D-ribose 1-diphosphate: step 7/9. This chain is Histidinol-phosphate aminotransferase, found in Escherichia coli O8 (strain IAI1).